A 388-amino-acid chain; its full sequence is Succinate--CoA ligase [ADP-forming] subunit beta (388 aa).

The region spanning 9-244 (KSLFAEYGLP…PSQDDAREAH (236 aa)) is the ATP-grasp domain. ATP-binding positions include K46, 53–55 (GRG), E99, T102, and E107. Residues N199 and D213 each coordinate Mg(2+). Substrate is bound by residues N264 and 321–323 (GIV).

This sequence belongs to the succinate/malate CoA ligase beta subunit family. In terms of assembly, heterotetramer of two alpha and two beta subunits. Mg(2+) is required as a cofactor.

The catalysed reaction is succinate + ATP + CoA = succinyl-CoA + ADP + phosphate. The enzyme catalyses GTP + succinate + CoA = succinyl-CoA + GDP + phosphate. It participates in carbohydrate metabolism; tricarboxylic acid cycle; succinate from succinyl-CoA (ligase route): step 1/1. Succinyl-CoA synthetase functions in the citric acid cycle (TCA), coupling the hydrolysis of succinyl-CoA to the synthesis of either ATP or GTP and thus represents the only step of substrate-level phosphorylation in the TCA. The beta subunit provides nucleotide specificity of the enzyme and binds the substrate succinate, while the binding sites for coenzyme A and phosphate are found in the alpha subunit. In Shewanella woodyi (strain ATCC 51908 / MS32), this protein is Succinate--CoA ligase [ADP-forming] subunit beta.